The following is a 767-amino-acid chain: Cadherin-5 (767 aa).

Positions M1–G29 are cleaved as a signal peptide. The propeptide occupies V30–R51. Topologically, residues V30 to S593 are extracellular. E62, E63, D113, and E115 together coordinate Ca(2+). 5 Cadherin domains span residues R86–F155, F155–F261, K262–F373, N374–L475, and L475–Y581. N121 carries N-linked (GlcNAc...) asparagine glycosylation. Residues D147, I148, N149, D150, N151, D180, and D182 each coordinate Ca(2+). N197 is a glycosylation site (N-linked (GlcNAc...) asparagine). A Ca(2+)-binding site is contributed by D233. N-linked (GlcNAc...) asparagine glycans are attached at residues N374, N477, and N518. A helical membrane pass occupies residues A594 to L614. At R615 to Y767 the chain is on the cytoplasmic side.

It is found in the cell membrane. It localises to the cell junction. Its subcellular location is the adherens junction. Its function is as follows. Cadherins are calcium-dependent cell adhesion proteins. They preferentially interact with themselves in a homophilic manner in connecting cells; cadherins may thus contribute to the sorting of heterogeneous cell types. Required for embryonic cardiac looping and heart chamber development, via promotion of cell-cell junction formation and subsequent attachment between the endothelial and myocardial layers of the heart. Required for the directional migration and delamination of endothelial cell monolayers, by which common cardinal veins form via the lumen ensheathment mechanism of vessel development as they migrate and connect with the heart inflow tract. Required for the formation of filopodia extensions (sprouts) at the initiation of intersegmental vessel development, by acting (via its C-terminus) to facilitate anchoring of the actin cytoskeleton to cell junctions in endothelial cells. Then positively regulates dorsal migration of stalk cells and sprout outgrowth towards the dorsal longitudinal anastomotic vessels (DLAV) via endothelial cell elongation. Following contact with the DLAV, required for intersegmental vessel lumen formation, potentially via facilitating the formation and/or extension of endothelial cell tight junctions that are required during tubulogenesis. In Danio rerio (Zebrafish), this protein is Cadherin-5.